The following is a 224-amino-acid chain: Uracil-DNA glycosylase (224 aa).

Aspartate 62 functions as the Proton acceptor in the catalytic mechanism.

It belongs to the uracil-DNA glycosylase (UDG) superfamily. UNG family.

Its subcellular location is the cytoplasm. The enzyme catalyses Hydrolyzes single-stranded DNA or mismatched double-stranded DNA and polynucleotides, releasing free uracil.. Functionally, excises uracil residues from the DNA which can arise as a result of misincorporation of dUMP residues by DNA polymerase or due to deamination of cytosine. This chain is Uracil-DNA glycosylase, found in Aliivibrio salmonicida (strain LFI1238) (Vibrio salmonicida (strain LFI1238)).